Consider the following 283-residue polypeptide: Galactooligosaccharides transport system permease protein GanQ (283 aa).

A run of 6 helical transmembrane segments spans residues 13-33 (LLFS…PLLW), 82-102 (ISLF…YAFS), 115-135 (LFLL…FVLA), 137-157 (ILGM…GLIP), 188-208 (IFFQ…AMNG), and 248-268 (TTFA…FIML). The 193-residue stretch at 76-268 (YVNSMKISLF…IPVAVIFIML (193 aa)) folds into the ABC transmembrane type-1 domain.

This sequence belongs to the binding-protein-dependent transport system permease family. In terms of assembly, the complex is composed of two ATP-binding proteins (MsmX), two transmembrane proteins (GanP and GanQ) and a solute-binding protein (GanS).

The protein resides in the cell membrane. In terms of biological role, involved in galactan degradation. Part of the ABC transporter complex GanPQS involved in the uptake of galactooligosaccharides. Responsible for the translocation of the substrate across the membrane. This is Galactooligosaccharides transport system permease protein GanQ (ganQ) from Bacillus subtilis (strain 168).